The chain runs to 141 residues: ATP synthase epsilon chain (141 aa).

This sequence belongs to the ATPase epsilon chain family. In terms of assembly, F-type ATPases have 2 components, CF(1) - the catalytic core - and CF(0) - the membrane proton channel. CF(1) has five subunits: alpha(3), beta(3), gamma(1), delta(1), epsilon(1). CF(0) has three main subunits: a, b and c.

It localises to the cell inner membrane. In terms of biological role, produces ATP from ADP in the presence of a proton gradient across the membrane. This is ATP synthase epsilon chain from Burkholderia ambifaria (strain ATCC BAA-244 / DSM 16087 / CCUG 44356 / LMG 19182 / AMMD) (Burkholderia cepacia (strain AMMD)).